A 407-amino-acid chain; its full sequence is Probable NADPH dehydrogenase (407 aa).

Positions 49 and 124 each coordinate FMN. Residue H201 to H204 participates in substrate binding. Y206 acts as the Proton donor in catalysis. FMN is bound by residues R254 and R357.

The protein belongs to the NADH:flavin oxidoreductase/NADH oxidase family. FMN serves as cofactor.

The enzyme catalyses A + NADPH + H(+) = AH2 + NADP(+). In terms of biological role, oxidoreductase that binds mammalian estrogens with high affinity. The protein is Probable NADPH dehydrogenase of Candida albicans (Yeast).